Reading from the N-terminus, the 777-residue chain is ATPase ARSA1 (777 aa).

110–117 is a binding site for ATP; the sequence is KGGVGKTS. Residue Asp-139 is part of the active site. ATP-binding positions include Asn-372 and 454–461; that span reads KGGVGKTS. The active site involves Asp-483. Position 712 (Asn-712) interacts with ATP.

This sequence belongs to the arsA ATPase family. In terms of assembly, monomer. Interacts with TOC34.

It is found in the cytoplasm. The protein resides in the cytosol. Its function is as follows. ATPase required for the post-translational delivery of tail-anchored (TA) proteins to the chloroplast. Required for the accumulation of TOC34, an essential component of the outer chloroplast membrane translocon (TOC) complex. Recognizes and selectively binds the transmembrane domain of TA proteins in the cytosol. This complex then targets to chloroplast, where the tail-anchored protein is released for insertion. This process is regulated by ATP binding and hydrolysis. In Chlamydomonas reinhardtii (Chlamydomonas smithii), this protein is ATPase ARSA1.